A 585-amino-acid chain; its full sequence is Proline--tRNA ligase (585 aa).

It belongs to the class-II aminoacyl-tRNA synthetase family. ProS type 1 subfamily. Homodimer.

It localises to the cytoplasm. The catalysed reaction is tRNA(Pro) + L-proline + ATP = L-prolyl-tRNA(Pro) + AMP + diphosphate. Functionally, catalyzes the attachment of proline to tRNA(Pro) in a two-step reaction: proline is first activated by ATP to form Pro-AMP and then transferred to the acceptor end of tRNA(Pro). As ProRS can inadvertently accommodate and process non-cognate amino acids such as alanine and cysteine, to avoid such errors it has two additional distinct editing activities against alanine. One activity is designated as 'pretransfer' editing and involves the tRNA(Pro)-independent hydrolysis of activated Ala-AMP. The other activity is designated 'posttransfer' editing and involves deacylation of mischarged Ala-tRNA(Pro). The misacylated Cys-tRNA(Pro) is not edited by ProRS. In Corynebacterium diphtheriae (strain ATCC 700971 / NCTC 13129 / Biotype gravis), this protein is Proline--tRNA ligase.